Here is a 331-residue protein sequence, read N- to C-terminus: PIN2/TERF1-interacting telomerase inhibitor 1 (331 aa).

Disordered stretches follow at residues 1 to 28, 156 to 175, and 197 to 331; these read MSML…DDSK, AQDG…LTTT, and SKSQ…KVSR. The G-patch domain occupies 26–72; it reads DSKFGQKMLEKMGWSKGKGLGAQEQGATEHIKVKVKNNHLGLGATNN. Ser-233 bears the Phosphoserine mark. Positions 236 to 246 are enriched in basic residues; it reads HKAKRHKKKKR. Over residues 247-261 the composition is skewed to basic and acidic residues; it reads VEAERGPAAKKRDQV. The segment at 254 to 328 is telomerase inhibitory domain (TID); sequence AAKKRDQVEL…DSAPVKKKKK (75 aa). 3 positions are modified to phosphoserine: Ser-269, Ser-274, and Ser-277. The TBM signature appears at 291-301; the sequence is QDDVPKPRKRR. Basic residues predominate over residues 297–306; sequence PRKRRAKKTL.

The protein belongs to the PINX1 family. In terms of assembly, interacts with MCRS1, TERT, TERF1, NCL/nucleolin, and the telomerase RNA.

The protein resides in the nucleus. It is found in the nucleolus. It localises to the chromosome. The protein localises to the telomere. Its subcellular location is the centromere. The protein resides in the kinetochore. Its function is as follows. Microtubule-binding protein essential for faithful chromosome segregation. Mediates TRF1 and TERT accumulation in nucleolus and enhances TRF1 binding to telomeres. Inhibits telomerase activity. May inhibit cell proliferation and act as tumor suppressor. The chain is PIN2/TERF1-interacting telomerase inhibitor 1 from Rattus norvegicus (Rat).